The chain runs to 558 residues: Vanin-like protein 1 (558 aa).

The first 22 residues, 1–22 (MSNTWWWLSVVLLILGLMPGMS), serve as a signal peptide directing secretion. The CN hydrolase domain maps to 33-299 (YTAGVVEFKQ…RAIYVAQVPK (267 aa)). N-linked (GlcNAc...) asparagine glycosylation is present at Asn65. The active-site Proton acceptor is the Glu76. Residues Asn103, Asn120, and Asn128 are each glycosylated (N-linked (GlcNAc...) asparagine). Lys171 serves as the catalytic Proton donor. An N-linked (GlcNAc...) asparagine glycan is attached at Asn180. Cys203 (nucleophile) is an active-site residue. N-linked (GlcNAc...) asparagine glycosylation is found at Asn354 and Asn379. Ser531 carries the GPI-anchor amidated serine lipid modification. The propeptide at 532–558 (GSPGLRILGGWLAMPLIILAIARTMSS) is removed in mature form.

This sequence belongs to the carbon-nitrogen hydrolase superfamily. BTD/VNN family. Expressed in larvae and early pupae. Expressed in third instar larvae.

The protein localises to the cell membrane. The protein is Vanin-like protein 1 of Drosophila melanogaster (Fruit fly).